The following is a 269-amino-acid chain: Phosphonoacetaldehyde hydrolase (269 aa).

Aspartate 10 (nucleophile) is an active-site residue. Residues aspartate 10 and alanine 12 each coordinate Mg(2+). The active-site Schiff-base intermediate with substrate is lysine 52. Position 186 (aspartate 186) interacts with Mg(2+).

This sequence belongs to the HAD-like hydrolase superfamily. PhnX family. Homodimer. Mg(2+) serves as cofactor.

It carries out the reaction phosphonoacetaldehyde + H2O = acetaldehyde + phosphate + H(+). Functionally, involved in phosphonate degradation. The sequence is that of Phosphonoacetaldehyde hydrolase from Salmonella paratyphi A (strain ATCC 9150 / SARB42).